Consider the following 276-residue polypeptide: Undecaprenyl-diphosphatase 2 (276 aa).

A run of 8 helical transmembrane segments spans residues 1-21 (MSLWFLVFLSVLQGVTELFPV), 44-64 (QLLPFLVALHLGTALALLWYF), 87-107 (GHLMWALIIGTIPTGIVGLLL), 114-134 (VFHDLRIVAIALIVNGVLLWL), 150-170 (MTFKQAFFVGLAQIGALIPGF), 190-210 (AAEFSFLLGTPIIFAAGVLEL), 222-242 (DALLGGVLTAIAAYLSVRFLM), and 251-271 (LASFGVYCVIAGVFCLGWFML).

It belongs to the UppP family.

The protein resides in the cell inner membrane. The catalysed reaction is di-trans,octa-cis-undecaprenyl diphosphate + H2O = di-trans,octa-cis-undecaprenyl phosphate + phosphate + H(+). Catalyzes the dephosphorylation of undecaprenyl diphosphate (UPP). Confers resistance to bacitracin. The sequence is that of Undecaprenyl-diphosphatase 2 from Burkholderia lata (strain ATCC 17760 / DSM 23089 / LMG 22485 / NCIMB 9086 / R18194 / 383).